We begin with the raw amino-acid sequence, 132 residues long: UPF0299 membrane protein CKO_00648 (132 aa).

4 helical membrane passes run 7 to 27, 31 to 51, 63 to 83, and 93 to 113; these read IIWQ…AGIF, LLPI…VLLA, GCYV…VGVM, and FGPV…VVSW.

Belongs to the UPF0299 family.

The protein resides in the cell inner membrane. This Citrobacter koseri (strain ATCC BAA-895 / CDC 4225-83 / SGSC4696) protein is UPF0299 membrane protein CKO_00648.